The following is a 306-amino-acid chain: ClpXP adapter protein SpxH (306 aa).

The protein belongs to the SpxH family. As to quaternary structure, interacts with Spx.

It localises to the cytoplasm. Adapter protein required for efficient degradation of Spx by ClpXP under non-stress conditions. Interaction with Spx stabilizes Spx and exposes the C-terminus of Spx for recognition and proteolysis by ClpXP. The chain is ClpXP adapter protein SpxH from Halalkalibacterium halodurans (strain ATCC BAA-125 / DSM 18197 / FERM 7344 / JCM 9153 / C-125) (Bacillus halodurans).